Consider the following 454-residue polypeptide: G-protein coupled receptor 39 (454 aa).

Residues 1–34 (MASPSHPSRDCSQVIDHSHVPEFEVATWIKITLI) lie on the Extracellular side of the membrane. Intrachain disulfides connect C11–C191 and C108–C210. Residues H17 and H19 each coordinate Zn(2+). A helical membrane pass occupies residues 35–55 (LVYLVIFVVGILGNSVTIRVT). Residues 56 to 69 (QVLQKKGYLQKEVT) lie on the Cytoplasmic side of the membrane. A helical membrane pass occupies residues 70 to 89 (DHMVSLACSDILVFLIGMPM). The Extracellular portion of the chain corresponds to 90–109 (EFYSIIWNPLTTPSYTVSCK). Residues 110-131 (VHTFLFEACSYATLLHVLTLSF) form a helical membrane-spanning segment. Topologically, residues 132 to 151 (ERYIAICHPFRYKAMSGPCQ) are cytoplasmic. A helical transmembrane segment spans residues 152-172 (VKLLIGFVWVTSALVALPLLF). The Extracellular portion of the chain corresponds to 173–217 (AMGVEYPLVNVPSHRGLICNRSRTRHQEQPESSNMSICTNLSSRW). N192, N206, and N212 each carry an N-linked (GlcNAc...) asparagine glycan. The helical transmembrane segment at 218–242 (TVFQSSIFSAFVVYLVVLVSVAFMC) threads the bilayer. The Cytoplasmic portion of the chain corresponds to 243–283 (WSMMQVLRRSKQGTLAAQGQQLQLRKLESQESRSARRQTII). Residues 284–305 (FLELIVVTLAVCWMPNQVRRIM) traverse the membrane as a helical segment. The Extracellular portion of the chain corresponds to 306-323 (AAAKPKHDWTKSYFRAYM). A helical membrane pass occupies residues 324–344 (ILLPFSDTFFYLSSVVNPLLY). The Cytoplasmic portion of the chain corresponds to 345 to 454 (NVSSQQFRSV…TRNGFQEHEV (110 aa)). S397 is subject to Phosphoserine. The tract at residues 415–454 (HSEAKPESKPQELSCESPEPNSERKPANPATRNGFQEHEV) is disordered.

Belongs to the G-protein coupled receptor 1 family. Interacts with HTR1A. Interacts with GALR1. As to expression, detected in liver, kidney, abomasum, uterus, small intestine and colon.

The protein resides in the cell membrane. Functionally, zinc-sensing receptor that can sense changes in extracellular Zn(2+), mediate Zn(2+) signal transmission, and participates in the regulation of numerous physiological processes including glucose homeostasis regulation, gastrointestinal mobility, hormone secretion and cell death. Activation by Zn(2+) in keratinocytes increases the intracellular concentration of Ca(2+) and activates the ERK/MAPK and PI3K/AKT signaling pathways leading to epithelial repair. Plays an essential role in normal wound healing by inducing the production of cytokines including the major inflammatory cytokine IL6 via the PKC/MAPK/CEBPB pathway. Regulates adipose tissue metabolism, especially lipolysis, and regulates the function of lipases, such as hormone-sensitive lipase and adipose triglyceride lipase. Plays a role in the inhibition of cell death and protects against oxidative, endoplasmic reticulum and mitochondrial stress by inducing secretion of the cytoprotective pigment epithelium-derived growth factor (PEDF) and probably other protective transcripts in a GNA13/RHOA/SRE-dependent manner. Forms dynamic heteroreceptor complexes with HTR1A and GALR1 depending on cell type or specific physiological states, resulting in signaling diversity: HTR1A-GPR39 shows additive increase in signaling along the serum response element (SRE) and NF-kappa-B pathways while GALR1 acts as an antagonist blocking SRE. This chain is G-protein coupled receptor 39 (GPR39), found in Bos taurus (Bovine).